The following is a 1088-amino-acid chain: DNA damage-binding protein 1b (1088 aa).

The protein belongs to the DDB1 family. Interacts with DDA1. Binds to KTN80.2/DWA3. Interacts with HTD1.

It is found in the nucleus. Its pathway is protein modification; protein ubiquitination. Its function is as follows. Component of light signal transduction machinery. Involved in repression of photomorphogenesis in darkness. Plays a role in DNA repair by forming with DDB2 the UV-damaged DNA-binding protein complex (UV-DDB). The chain is DNA damage-binding protein 1b from Arabidopsis thaliana (Mouse-ear cress).